Reading from the N-terminus, the 611-residue chain is Brain-enriched guanylate kinase-associated protein (611 aa).

Tyr-156 bears the Phosphotyrosine mark. Ser-219, Ser-248, and Ser-265 each carry phosphoserine. Position 268 is a phosphothreonine (Thr-268). A phosphoserine mark is found at Ser-284, Ser-364, and Ser-391. Arg-399 is modified (asymmetric dimethylarginine). Ser-474, Ser-484, Ser-494, Ser-496, Ser-519, Ser-521, and Ser-525 each carry phosphoserine. The disordered stretch occupies residues 520-611 (LSPSRSADPL…KAQLYGTLLN (92 aa)). A compositionally biased stretch (basic and acidic residues) spans 554–563 (EPEHGSRDSL). Residues Ser-571 and Ser-581 each carry the phosphoserine modification.

Interacts with DLG4 and DLGAP1 and forms a ternary complex. In terms of tissue distribution, brain-specific. Expressed in neurons and rather enriched at synaptic junctions.

The protein resides in the cytoplasm. It localises to the membrane. In terms of biological role, may sustain the structure of the postsynaptic density (PSD). In Rattus norvegicus (Rat), this protein is Brain-enriched guanylate kinase-associated protein (Begain).